Here is a 163-residue protein sequence, read N- to C-terminus: uncharacterized protein (163 aa).

The span at 1–10 shows a compositional bias: basic and acidic residues; it reads MGVPRAREGR. A disordered region spans residues 1-163; sequence MGVPRAREGR…WSFTPLRWGS (163 aa).

This is an uncharacterized protein from Homo sapiens (Human).